The sequence spans 312 residues: Glyoxylate/hydroxypyruvate reductase A (312 aa).

The active site involves Arg227. The active-site Proton donor is His275.

Belongs to the D-isomer specific 2-hydroxyacid dehydrogenase family. GhrA subfamily.

The protein localises to the cytoplasm. The enzyme catalyses glycolate + NADP(+) = glyoxylate + NADPH + H(+). The catalysed reaction is (R)-glycerate + NAD(+) = 3-hydroxypyruvate + NADH + H(+). It carries out the reaction (R)-glycerate + NADP(+) = 3-hydroxypyruvate + NADPH + H(+). In terms of biological role, catalyzes the NADPH-dependent reduction of glyoxylate and hydroxypyruvate into glycolate and glycerate, respectively. This chain is Glyoxylate/hydroxypyruvate reductase A, found in Escherichia coli O17:K52:H18 (strain UMN026 / ExPEC).